The following is a 136-amino-acid chain: Crossover junction endodeoxyribonuclease Hjc (136 aa).

Residue Glu-9 participates in Mg(2+) binding. Ser-29 is an active-site residue. Mg(2+) contacts are provided by Asp-38 and Glu-51.

It belongs to the Holliday junction resolvase Hjc family. Homodimer. Requires Mg(2+) as cofactor.

The catalysed reaction is Endonucleolytic cleavage at a junction such as a reciprocal single-stranded crossover between two homologous DNA duplexes (Holliday junction).. In terms of biological role, a structure-specific endonuclease that resolves Holliday junction (HJ) intermediates during genetic recombination. Cleaves 4-way DNA junctions introducing paired nicks in opposing strands, leaving a 5'-terminal phosphate and a 3'-terminal hydroxyl group that are subsequently ligated to produce recombinant products. The sequence is that of Crossover junction endodeoxyribonuclease Hjc from Archaeoglobus fulgidus (strain ATCC 49558 / DSM 4304 / JCM 9628 / NBRC 100126 / VC-16).